We begin with the raw amino-acid sequence, 333 residues long: tRNA dimethylallyltransferase (333 aa).

23–30 serves as a coordination point for ATP; the sequence is GPTGAGKT. Residue 25-30 coordinates substrate; it reads TGAGKT. Interaction with substrate tRNA stretches follow at residues 53–56 and 177–181; these read DSAL and QRVQR.

It belongs to the IPP transferase family. As to quaternary structure, monomer. Requires Mg(2+) as cofactor.

It carries out the reaction adenosine(37) in tRNA + dimethylallyl diphosphate = N(6)-dimethylallyladenosine(37) in tRNA + diphosphate. Catalyzes the transfer of a dimethylallyl group onto the adenine at position 37 in tRNAs that read codons beginning with uridine, leading to the formation of N6-(dimethylallyl)adenosine (i(6)A). This Polynucleobacter asymbioticus (strain DSM 18221 / CIP 109841 / QLW-P1DMWA-1) (Polynucleobacter necessarius subsp. asymbioticus) protein is tRNA dimethylallyltransferase.